The primary structure comprises 475 residues: ATP synthase subunit beta (475 aa).

153–160 lines the ATP pocket; it reads GGAGVGKT.

It belongs to the ATPase alpha/beta chains family. In terms of assembly, F-type ATPases have 2 components, CF(1) - the catalytic core - and CF(0) - the membrane proton channel. CF(1) has five subunits: alpha(3), beta(3), gamma(1), delta(1), epsilon(1). CF(0) has three main subunits: a(1), b(2) and c(9-12). The alpha and beta chains form an alternating ring which encloses part of the gamma chain. CF(1) is attached to CF(0) by a central stalk formed by the gamma and epsilon chains, while a peripheral stalk is formed by the delta and b chains.

The protein resides in the cell membrane. The enzyme catalyses ATP + H2O + 4 H(+)(in) = ADP + phosphate + 5 H(+)(out). Produces ATP from ADP in the presence of a proton gradient across the membrane. The catalytic sites are hosted primarily by the beta subunits. In Limosilactobacillus reuteri (strain DSM 20016) (Lactobacillus reuteri), this protein is ATP synthase subunit beta.